Reading from the N-terminus, the 247-residue chain is Probable proteasome subunit alpha type-5 (247 aa).

Threonine 55 is modified (phosphothreonine).

The protein belongs to the peptidase T1A family. The 26S proteasome consists of a 20S proteasome core and two 19S regulatory subunits. The 20S proteasome core is composed of 28 subunits that are arranged in four stacked rings, resulting in a barrel-shaped structure. The two end rings are each formed by seven alpha subunits, and the two central rings are each formed by seven beta subunits. The catalytic chamber with the active sites is on the inside of the barrel.

Its subcellular location is the cytoplasm. It is found in the nucleus. Functionally, the proteasome is a multicatalytic proteinase complex which is characterized by its ability to cleave peptides with Arg, Phe, Tyr, Leu, and Glu adjacent to the leaving group at neutral or slightly basic pH. The proteasome has an ATP-dependent proteolytic activity. This is Probable proteasome subunit alpha type-5 (pup2) from Schizosaccharomyces pombe (strain 972 / ATCC 24843) (Fission yeast).